The following is a 108-amino-acid chain: Type III secretion system chaperone SseA (108 aa).

Positions 69–97 (NQEAEKDLKKIVSLFKQLEVRLKQLNAQA) form a coiled coil.

In terms of assembly, binds to SseB and SseD.

The protein localises to the cytoplasm. Functionally, functions as a type III secretion system (T3SS) chaperone, which is required for SseB and SseD accumulation and secretion. May have a direct role in secretion of SseB and SseD, or may facilitate their correct folding, for efficient secretion and function. Required for survival and replication within epithelial cells and macrophages. The chain is Type III secretion system chaperone SseA (sseA) from Salmonella typhimurium (strain LT2 / SGSC1412 / ATCC 700720).